A 526-amino-acid chain; its full sequence is MADDREKSTDQMKLWKEGRGSQRPDVLTTGAGVPIGDKLNAMTAGPRGPLLVQDVVFTDEMAHFDRERIPERVVHAKGAGAFGYFEVTHDITRYSKAKVFEHVGKTTPIVVRFSTVAGEAGSPDTVRDPRGFAVKFYTDEGNWDLTGNNTPTFFIRDTLLSPSFIHSQKRNPQTHLKDPDMVWDFWSLRPESLHQVSFLFSDRGIPDGYRHMNGYGSHTFKLVNAQGQPVYCKFHYKTNQGIKNIPVEEADRLAATDPDYSIRDLYNAIANGNFPSWTFYIQVMTFEQAENWKWNPFDLTKVWSHKEFPLIPVGRFVLNRNPVNYFAEVEQLAFDPSNMPPGIEPSPDKMLQGRLFSYPDTHRHRLGANYLQLPVNCPYRTRVANYQRDGPMCMHDNQGGAPNYYPNSFSAPDVQPRFLESKCKVSPDVARYNSADDDNVTQVRTFFTQVLNEAERERLCQNMAGHLKGAQLFIQKRMVQNLMAVHSDYGNRVQALLDKHNAEGKKNTVHVYSRGGASAVAAASKM.

Basic and acidic residues predominate over residues methionine 1–glutamine 22. A disordered region spans residues methionine 1–threonine 29. Catalysis depends on residues histidine 75 and asparagine 148. NADP(+)-binding residues include histidine 194, serine 201, arginine 203, asparagine 213, lysine 237, tryptophan 303, histidine 305, and lysine 306. Tyrosine 358 contacts heme.

It belongs to the catalase family. As to quaternary structure, homotetramer. Heme serves as cofactor. NADP(+) is required as a cofactor.

The protein resides in the peroxisome matrix. It carries out the reaction 2 H2O2 = O2 + 2 H2O. In terms of biological role, catalyzes the degradation of hydrogen peroxide (H(2)O(2)) generated by peroxisomal oxidases to water and oxygen, thereby protecting cells from the toxic effects of hydrogen peroxide. The protein is Catalase (cat) of Danio rerio (Zebrafish).